The following is a 465-amino-acid chain: MSLSLWQQCLARLQDELPATEFSMWIRPLQAELSDNTLALYAPNRFVLDWVRDKYLNNINVLLNDFCGMDAPLLRFEVGSKPLVQTISQPAQSHHNPVSVARQQPVRMAPVRPSWDNSPVQAEHTYRSNVNPKHTFDNFVEGKSNQLARAAARQVADNPGGAYNPLFLYGGTGLGKTHLLHAVGNGIIARKPNAKVVYMHSERFVQDMVKALQNNAIEEFKRYYRSVDALLIDDIQFFANKERSQEEFFHTFNALLEGNQQIILTSDRYPKEINGVEDRLKSRFGWGLTVAIEPPELETRVAILMKKADENDIRLPGEVAFFIAKRLRSNVRELEGALNRVIANANFTGRSITIDFVREALRDLLALQEKLVTIDNIQKTVAEYYKIKIADLLSKRRSRSVARPRQMAMALAKELTNHSLPEIGDAFGGRDHTTVLHACRKIEQLREESHDIKEDFSNLIRTLSS.

The interval 1–84 is domain I, interacts with DnaA modulators; sequence MSLSLWQQCL…RFEVGSKPLV (84 aa). The tract at residues 84–128 is domain II; it reads VQTISQPAQSHHNPVSVARQQPVRMAPVRPSWDNSPVQAEHTYRS. Residues 129–345 form a domain III, AAA+ region region; the sequence is NVNPKHTFDN…GALNRVIANA (217 aa). ATP-binding residues include G173, G175, K176, and T177. Residues 346–465 form a domain IV, binds dsDNA region; the sequence is NFTGRSITID…FSNLIRTLSS (120 aa).

Belongs to the DnaA family. As to quaternary structure, oligomerizes as a right-handed, spiral filament on DNA at oriC.

It localises to the cytoplasm. Plays an essential role in the initiation and regulation of chromosomal replication. ATP-DnaA binds to the origin of replication (oriC) to initiate formation of the DNA replication initiation complex once per cell cycle. Binds the DnaA box (a 9 base pair repeat at the origin) and separates the double-stranded (ds)DNA. Forms a right-handed helical filament on oriC DNA; dsDNA binds to the exterior of the filament while single-stranded (ss)DNA is stabiized in the filament's interior. The ATP-DnaA-oriC complex binds and stabilizes one strand of the AT-rich DNA unwinding element (DUE), permitting loading of DNA polymerase. After initiation quickly degrades to an ADP-DnaA complex that is not apt for DNA replication. Binds acidic phospholipids. This is Chromosomal replication initiator protein DnaA from Pectobacterium atrosepticum (strain SCRI 1043 / ATCC BAA-672) (Erwinia carotovora subsp. atroseptica).